Here is a 292-residue protein sequence, read N- to C-terminus: NAD kinase (292 aa).

Catalysis depends on Asp73, which acts as the Proton acceptor. Residues 73-74 (DG), 147-148 (NE), His158, Arg175, Asp177, 188-193 (TAYSLS), and Gln247 contribute to the NAD(+) site.

It belongs to the NAD kinase family. The cofactor is a divalent metal cation.

It localises to the cytoplasm. It carries out the reaction NAD(+) + ATP = ADP + NADP(+) + H(+). Functionally, involved in the regulation of the intracellular balance of NAD and NADP, and is a key enzyme in the biosynthesis of NADP. Catalyzes specifically the phosphorylation on 2'-hydroxyl of the adenosine moiety of NAD to yield NADP. The polypeptide is NAD kinase (Shigella dysenteriae serotype 1 (strain Sd197)).